The sequence spans 403 residues: Protein IQ-DOMAIN 23 (403 aa).

The tract at residues 1–43 is disordered; the sequence is MGFFGRLFGSKKKSDKAASSRDKRRWSFTTRSSNSSKRAPAVT. The Nuclear localization signal motif lies at 10–17; sequence SKKKSDKA. A compositionally biased stretch (polar residues) spans 27-43; the sequence is SFTTRSSNSSKRAPAVT. Positions 115-133 are calmodulin-binding; that stretch reads QENIAAMKIQSAFRGYLAR. IQ domains lie at 116–144 and 145–167; these read ENIAAMKIQSAFRGYLARRALRALKALVK and LQALVRGHIVRKQTADMLRRMQT. Disordered stretches follow at residues 176 to 208, 242 to 301, and 381 to 403; these read RARASRSSHSSASFHSSTALLFPSSSSSPRSLH, ILEV…PTSR, and GGDSDRLNRNQSAKSRMHSSFLV. Residues 257–267 show a composition bias toward basic and acidic residues; sequence LRSERNNESPR.

The protein belongs to the IQD family. As to quaternary structure, binds to multiple calmodulin (CaM) in the presence of Ca(2+) and CaM-like proteins.

The protein resides in the nucleus. It localises to the nucleolus. It is found in the cytoplasm. Its subcellular location is the cytoskeleton. The protein localises to the cell membrane. May be involved in cooperative interactions with calmodulins or calmodulin-like proteins. Recruits calmodulin proteins to microtubules, thus being a potential scaffold in cellular signaling and trafficking. May associate with nucleic acids and regulate gene expression at the transcriptional or post-transcriptional level. This is Protein IQ-DOMAIN 23 from Arabidopsis thaliana (Mouse-ear cress).